Consider the following 515-residue polypeptide: 2,3-bisphosphoglycerate-independent phosphoglycerate mutase (515 aa).

Asp14 and Ser63 together coordinate Mn(2+). Ser63 is an active-site residue. Substrate is bound by residues His124, 154 to 155 (RD), Arg186, Arg192, 259 to 262 (RADR), and Lys334. Mn(2+) is bound by residues Asp401, His405, Asp442, His443, and His460.

Belongs to the BPG-independent phosphoglycerate mutase family. Mg(2+) serves as cofactor. Requires Mn(2+) as cofactor.

It carries out the reaction (2R)-2-phosphoglycerate = (2R)-3-phosphoglycerate. It functions in the pathway carbohydrate degradation; glycolysis; pyruvate from D-glyceraldehyde 3-phosphate: step 3/5. With respect to regulation, activity is not affected by 2,3-bisphosphoglycerate. Its function is as follows. Catalyzes the interconversion of 2-phosphoglycerate and 3-phosphoglycerate. The sequence is that of 2,3-bisphosphoglycerate-independent phosphoglycerate mutase from Onchocerca volvulus.